The chain runs to 96 residues: Cytoplasmic envelopment protein 3 (96 aa).

Glycine 2 carries the N-myristoyl glycine; by host lipid modification. The interval 37 to 43 is asp/Glu-rich (acidic); the sequence is DIESEEE. Serine 40 carries the phosphoserine modification. The segment at 50–96 is disordered; sequence PDVRVVTRAPGPQYRRPSDPPSRHTRRRDPDVARPPATLTPPLSDSE. Over residues 65–81 the composition is skewed to basic and acidic residues; it reads RPSDPPSRHTRRRDPDV.

It belongs to the herpesviridae cytoplasmic envelopment protein 3 family. In terms of assembly, interacts with cytoplasmic envelopment protein 2; this interaction is essential for the proper localization of each protein to the assembly complex and thus for the production of infectious virus. Interacts with gE (via C-terminus). Interacts with gD (via C-terminus). Interacts with UL56. In terms of processing, myristoylation and palmitoylation (probably on one or more of the nearby cysteines at the N-terminus) enable membrane-binding and Golgi apparatus-specific targeting and are essential for efficient packaging. Post-translationally, phosphorylated. Phosphorylation does not seem to be required for recycling to the host Golgi apparatus. Packaging is selective for underphosphorylated forms.

It localises to the virion tegument. The protein resides in the virion membrane. Its subcellular location is the host cell membrane. It is found in the host Golgi apparatus membrane. Plays an important role in the cytoplasmic envelopment of tegument proteins and capsids during the assembly and egress processes. Also participates in viral entry at the fusion step probably by regulating the core fusion machinery. This chain is Cytoplasmic envelopment protein 3, found in Homo sapiens (Human).